The sequence spans 206 residues: Ras-related protein Rab-7a (206 aa).

15–22 (GDSGVGKT) provides a ligand contact to GTP. 2 positions are modified to phosphoserine: Ser17 and Ser23. A phosphothreonine mark is found at Thr34, Thr40, and Thr64. GTP-binding positions include 34-40 (TQQYRAT) and 63-67 (DTAGQ). The Effector region signature appears at 37-45 (YRATVGADF). A Phosphoserine modification is found at Ser72. Tyr78 and Tyr88 each carry phosphotyrosine. GTP contacts are provided by residues 125–128 (NKLD) and 157–158 (AK). S-geranylgeranyl cysteine attachment occurs at residues Cys205 and Cys206.

It belongs to the small GTPase superfamily. Rab family.

The protein resides in the cytoplasmic vesicle. It localises to the phagosome membrane. It is found in the late endosome membrane. Its subcellular location is the lysosome membrane. The protein localises to the autophagosome membrane. The protein resides in the lipid droplet. It catalyses the reaction GTP + H2O = GDP + phosphate + H(+). Functionally, small GTPase which cycles between active GTP-bound and inactive GDP-bound states. In its active state, binds to a variety of effector proteins playing a key role in the regulation of endo-lysosomal trafficking. Governs early-to-late endosomal maturation, microtubule minus-end as well as plus-end directed endosomal migration and positioning, and endosome-lysosome transport through different protein-protein interaction cascades. Involved in lipophagy, a cytosolic lipase-independent autophagic pathway. Plays a role in phagocyte formation and acidification. In Paramecium octaurelia, this protein is Ras-related protein Rab-7a.